A 559-amino-acid chain; its full sequence is Probable 2-ketoarginine decarboxylase AruI (559 aa).

E76 contributes to the thiamine diphosphate binding site.

The protein belongs to the TPP enzyme family. Requires thiamine diphosphate as cofactor.

It catalyses the reaction 5-guanidino-2-oxopentanoate + H(+) = 4-guanidinobutanal + CO2. It functions in the pathway amino-acid degradation; L-arginine degradation. Catalyzes the decarboxylation of 2-ketoarginine, leading to the formation of 4-guanidinobutyraldehyde. This is Probable 2-ketoarginine decarboxylase AruI (aruI) from Pseudomonas aeruginosa (strain ATCC 15692 / DSM 22644 / CIP 104116 / JCM 14847 / LMG 12228 / 1C / PRS 101 / PAO1).